A 293-amino-acid chain; its full sequence is Probable endonuclease 4 (293 aa).

Histidine 78, histidine 118, glutamate 154, aspartate 188, histidine 191, histidine 225, aspartate 238, histidine 240, and glutamate 270 together coordinate Zn(2+).

The protein belongs to the AP endonuclease 2 family. Zn(2+) serves as cofactor.

The catalysed reaction is Endonucleolytic cleavage to 5'-phosphooligonucleotide end-products.. In terms of biological role, endonuclease IV plays a role in DNA repair. It cleaves phosphodiester bonds at apurinic or apyrimidinic (AP) sites, generating a 3'-hydroxyl group and a 5'-terminal sugar phosphate. The protein is Probable endonuclease 4 of Vibrio vulnificus (strain YJ016).